Here is a 292-residue protein sequence, read N- to C-terminus: MPQHDQLHRYLFENFAVRGELVTVSETLQQILENHDYPQPVKNVLAELLVATSLLTATLKFDGDITVQLQGDGPMNLAVINGNNNQQMRGVARVQGEIPENADLKTLVGNGYVVITITPSEGERYQGVVGLEGDTLAACLEDYFMRSEQLPTRLFIRTGDVDGKPAAGGMLLQVMPAQNAQQDDFDHLATLTETIKTEELLTLPANEVLWRLYHEEEVTVYDPQDVEFKCTCSRERCADALKTLPDEEVDSILTEDGEIDMHCDYCGNHYLFNAMDIAEIRNNASPADPQVH.

2 disulfides stabilise this stretch: cysteine 230/cysteine 232 and cysteine 263/cysteine 266.

This sequence belongs to the HSP33 family. In terms of processing, under oxidizing conditions two disulfide bonds are formed involving the reactive cysteines. Under reducing conditions zinc is bound to the reactive cysteines and the protein is inactive.

Its subcellular location is the cytoplasm. Redox regulated molecular chaperone. Protects both thermally unfolding and oxidatively damaged proteins from irreversible aggregation. Plays an important role in the bacterial defense system toward oxidative stress. This Escherichia coli O17:K52:H18 (strain UMN026 / ExPEC) protein is 33 kDa chaperonin.